A 399-amino-acid chain; its full sequence is uncharacterized protein (399 aa).

WD repeat units lie at residues 59–99, 102–141, 144–185, 187–227, 241–280, 283–322, 324–363, and 366–399; these read EHKD…QICQ, GHKD…EFIT, ETVD…QVMY, HTAP…PECR, ETAA…ILAS, AQTE…FRKS, PHEQ…LLGE, and GHQE…DCEH.

The protein localises to the cytoplasm. The protein resides in the nucleus. This is an uncharacterized protein from Schizosaccharomyces pombe (strain 972 / ATCC 24843) (Fission yeast).